A 70-amino-acid chain; its full sequence is Small ribosomal subunit protein bS18c (70 aa).

The protein belongs to the bacterial ribosomal protein bS18 family. In terms of assembly, part of the 30S ribosomal subunit.

It localises to the plastid. The protein localises to the chloroplast. The protein is Small ribosomal subunit protein bS18c of Pyropia yezoensis (Susabi-nori).